A 291-amino-acid polypeptide reads, in one-letter code: ATP synthase gamma chain (291 aa).

This sequence belongs to the ATPase gamma chain family. F-type ATPases have 2 components, CF(1) - the catalytic core - and CF(0) - the membrane proton channel. CF(1) has five subunits: alpha(3), beta(3), gamma(1), delta(1), epsilon(1). CF(0) has three main subunits: a, b and c.

The protein resides in the cell membrane. Produces ATP from ADP in the presence of a proton gradient across the membrane. The gamma chain is believed to be important in regulating ATPase activity and the flow of protons through the CF(0) complex. This is ATP synthase gamma chain from Lachnoclostridium phytofermentans (strain ATCC 700394 / DSM 18823 / ISDg) (Clostridium phytofermentans).